The following is a 410-amino-acid chain: Protein trichome birefringence-like 34 (410 aa).

Residues 13–33 form a helical; Signal-anchor for type II membrane protein membrane-spanning segment; it reads TSFHTIAAVLVAGLIFTAVFL. A GDS motif motif is present at residues 133–135; sequence GDS. The DCXHWCLPGXXDXWN motif motif lies at 383-397; the sequence is DCIHWCLPGVPDVWN.

This sequence belongs to the PC-esterase family. TBL subfamily.

Its subcellular location is the golgi apparatus membrane. In terms of biological role, may act as a bridging protein that binds pectin and other cell wall polysaccharides. Probably involved in maintaining esterification of pectins. May be involved in the specific O-acetylation of cell wall polymers. This is Protein trichome birefringence-like 34 (TBL34) from Arabidopsis thaliana (Mouse-ear cress).